Reading from the N-terminus, the 66-residue chain is MAKGKDVRVTIILECTSCVRNDIKKESAGISRYITQKNRHNTPSRLELRKFCPYCSKHTIHGEIKK.

It belongs to the bacterial ribosomal protein bL33 family.

The protein localises to the plastid. The protein resides in the chloroplast. This is Large ribosomal subunit protein bL33c from Barbarea verna (Land cress).